The following is a 201-amino-acid chain: dCTP deaminase, dUMP-forming (201 aa).

Residues 101–106 (KSSLGR), Asp119, 127–129 (TLE), Gln148, Tyr162, and Gln174 each bind dCTP. Glu129 acts as the Proton donor/acceptor in catalysis.

The protein belongs to the dCTP deaminase family. As to quaternary structure, homotrimer.

The catalysed reaction is dCTP + 2 H2O = dUMP + NH4(+) + diphosphate. It participates in pyrimidine metabolism; dUMP biosynthesis; dUMP from dCTP: step 1/1. Functionally, bifunctional enzyme that catalyzes both the deamination of dCTP to dUTP and the hydrolysis of dUTP to dUMP without releasing the toxic dUTP intermediate. The chain is dCTP deaminase, dUMP-forming from Parafrankia sp. (strain EAN1pec).